The following is a 109-amino-acid chain: Red pigment-concentrating prohormone (109 aa).

A signal peptide spans 1 to 25; it reads MVRRSGVTLLVVALLVVTLMSSVSA. Q26 is modified (pyrrolidone carboxylic acid). W33 carries the tryptophan amide modification. The tract at residues 34 to 78 is disordered; the sequence is GKRAAGASGSNGGVGEAVSGLHPSVGGAPGGVVPPGSSSPGDSCG. Low complexity-rich tracts occupy residues 49-59 and 67-78; these read EAVSGLHPSVG and PPGSSSPGDSCG.

This sequence belongs to the AKH/HRTH/RPCH family.

The protein localises to the secreted. Functionally, this hormone adapts the animal to light backgrounds by stimulating concentration of the pigment of its red body-chromatophores. This is Red pigment-concentrating prohormone from Callinectes sapidus (Blue crab).